The primary structure comprises 60 residues: Metallothionein A (60 aa).

A beta region spans residues 1 to 28; the sequence is MDPCECSKSGTCNCGGSCTCTNCSCKSC. Residues Cys4, Cys6, Cys12, Cys14, Cys18, Cys20, Cys23, Cys25, Cys28, Cys32, Cys33, Cys35, Cys36, Cys40, Cys43, Cys47, Cys49, Cys54, Cys58, and Cys59 each coordinate a divalent metal cation. An alpha region spans residues 29–60; it reads KKSCCPCCPSGCTKCASGCVCKGKTCDTSCCQ.

It belongs to the metallothionein superfamily. Type 1 family.

Metallothioneins have a high content of cysteine residues that bind various heavy metals. The polypeptide is Metallothionein A (mta) (Chionodraco rastrospinosus (Ocellated icefish)).